A 334-amino-acid polypeptide reads, in one-letter code: Methionine adenosyltransferase 2 subunit beta (334 aa).

NADP(+) contacts are provided by residues Thr-37–Leu-40, Phe-60–Arg-62, Asn-71–Leu-72, Cys-93, Arg-97, Tyr-159, and Leu-185. Thr-309 carries the phosphothreonine modification. Residues Leu-319–His-334 form a required for interaction with MAT2A region.

This sequence belongs to the dTDP-4-dehydrorhamnose reductase family. MAT2B subfamily. As to quaternary structure, heterotrimer; composed of a catalytic MAT2A homodimer that binds one regulatory MAT2B chain. Heterohexamer; composed of a central, catalytic MAT2A homotetramer flanked on either side by a regulatory MAT2B chain. NADP binding increases the affinity for MAT2A.

It functions in the pathway amino-acid biosynthesis; S-adenosyl-L-methionine biosynthesis; S-adenosyl-L-methionine from L-methionine: step 1/1. In terms of biological role, regulatory subunit of S-adenosylmethionine synthetase 2, an enzyme that catalyzes the formation of S-adenosylmethionine from methionine and ATP. Regulates MAT2A catalytic activity by changing its kinetic properties, increasing its affinity for L-methionine. Can bind NADP (in vitro). The protein is Methionine adenosyltransferase 2 subunit beta (Mat2b) of Mus musculus (Mouse).